The following is a 212-amino-acid chain: N-(5'-phosphoribosyl)anthranilate isomerase (212 aa).

It belongs to the TrpF family.

It carries out the reaction N-(5-phospho-beta-D-ribosyl)anthranilate = 1-(2-carboxyphenylamino)-1-deoxy-D-ribulose 5-phosphate. The protein operates within amino-acid biosynthesis; L-tryptophan biosynthesis; L-tryptophan from chorismate: step 3/5. The polypeptide is N-(5'-phosphoribosyl)anthranilate isomerase (Cereibacter sphaeroides (strain ATCC 17029 / ATH 2.4.9) (Rhodobacter sphaeroides)).